A 179-amino-acid chain; its full sequence is Ribosome maturation factor RimM (179 aa).

A PRC barrel domain is found at 102 to 173 (PEEYHYRDLI…ALHVQPPPGL (72 aa)).

Belongs to the RimM family. As to quaternary structure, binds ribosomal protein uS19.

The protein localises to the cytoplasm. An accessory protein needed during the final step in the assembly of 30S ribosomal subunit, possibly for assembly of the head region. Essential for efficient processing of 16S rRNA. May be needed both before and after RbfA during the maturation of 16S rRNA. It has affinity for free ribosomal 30S subunits but not for 70S ribosomes. The polypeptide is Ribosome maturation factor RimM (Synechococcus sp. (strain JA-2-3B'a(2-13)) (Cyanobacteria bacterium Yellowstone B-Prime)).